The following is a 122-amino-acid chain: Large ribosomal subunit protein uL14 (122 aa).

The protein belongs to the universal ribosomal protein uL14 family. Part of the 50S ribosomal subunit. Forms a cluster with proteins L3 and L19. In the 70S ribosome, L14 and L19 interact and together make contacts with the 16S rRNA in bridges B5 and B8.

Its function is as follows. Binds to 23S rRNA. Forms part of two intersubunit bridges in the 70S ribosome. This chain is Large ribosomal subunit protein uL14, found in Leuconostoc mesenteroides subsp. mesenteroides (strain ATCC 8293 / DSM 20343 / BCRC 11652 / CCM 1803 / JCM 6124 / NCDO 523 / NBRC 100496 / NCIMB 8023 / NCTC 12954 / NRRL B-1118 / 37Y).